The following is a 303-amino-acid chain: Acetylglutamate kinase (303 aa).

Substrate contacts are provided by residues 67-68 (GG), Arg-89, and Asn-193.

This sequence belongs to the acetylglutamate kinase family. ArgB subfamily.

Its subcellular location is the cytoplasm. The enzyme catalyses N-acetyl-L-glutamate + ATP = N-acetyl-L-glutamyl 5-phosphate + ADP. The protein operates within amino-acid biosynthesis; L-arginine biosynthesis; N(2)-acetyl-L-ornithine from L-glutamate: step 2/4. In terms of biological role, catalyzes the ATP-dependent phosphorylation of N-acetyl-L-glutamate. The sequence is that of Acetylglutamate kinase from Acinetobacter baylyi (strain ATCC 33305 / BD413 / ADP1).